We begin with the raw amino-acid sequence, 508 residues long: MDNYPKLEEMMLLSNGAPQFLGAAGTPEGSGGNNSSSSSSSSSGGGGGGGSNSGSSAFNPQGEPSEQPYEHLTTESFSDIALNNEKALVETSYPSQTTRLPPITYTGRFSLEPAPNSGNTLWPEPLFSLVSGLVSMTNPPTSSSSAPSPAASSSSSASQSPPLSCAVPSNDSSPIYSAAPTFPTPNTDIFPEPQSQAFPGSAGTALQYPPPAYPATKGGFQVPMIPDYLFPQQQGDLSLGTPDQKPFQGLENRTQQPSLTPLSTIKAFATQSGSQDLKALNNTYQSQLIKPSRMRKYPNRPSKTPPHERPYACPVESCDRRFSRSDELTRHIRIHTGQKPFQCRICMRNFSRSDHLTTHIRTHTGEKPFACDICGRKFARSDERKRHTKIHLRQKDKKADKSVVASSAASSLSSYPSPVATSYPSPATTSFPSPVPTSYSSPGSSTYPSPAHSGFPSPSVATTYASVPPAFPAQVSTFQSAGVSNSFSTSTGLSDMTATFSPRTIEIC.

Disordered regions lie at residues 18 to 78 (PQFL…ESFS) and 136 to 210 (MTNP…QYPP). Residues 33–42 (NNSSSSSSSS) show a composition bias toward low complexity. Positions 43–52 (SGGGGGGGSN) are enriched in gly residues. Residues 139-164 (PPTSSSSAPSPAASSSSSASQSPPLS) show a composition bias toward low complexity. A Glycyl lysine isopeptide (Lys-Gly) (interchain with G-Cter in SUMO2) cross-link involves residue Lys278. A disordered region spans residues 292-311 (SRMRKYPNRPSKTPPHERPY). 3 C2H2-type zinc fingers span residues 311-335 (YACP…IRIH), 341-363 (FQCR…IRTH), and 369-391 (FACD…TKIH). The tract at residues 382–453 (DERKRHTKIH…SSTYPSPAHS (72 aa)) is disordered. A compositionally biased stretch (basic residues) spans 386–396 (RHTKIHLRQKD). The span at 402 to 450 (SVVASSAASSLSSYPSPVATSYPSPATTSFPSPVPTSYSSPGSSTYPSP) shows a compositional bias: low complexity. A run of 7 repeats spans residues 413-420 (SSYPSPVA), 421-428 (TSYPSPAT), 429-436 (TSFPSPVP), 437-444 (TSYSSPGS), 445-452 (STYPSPAH), 453-460 (SGFPSPSV), and 462-468 (TTYASVP). The interval 413–468 (SSYPSPVATSYPSPATTSFPSPVPTSYSSPGSSTYPSPAHSGFPSPSVATTYASVP) is 7 X 8 AA tandem repeats of [TS](2)-[FY]-[PS]-S-P-[GSAV]-X.

This sequence belongs to the EGR C2H2-type zinc-finger protein family. In terms of assembly, interacts with SNAI1 and SP1 upon 12-O-tetradecanoylphorbol-13-acetate (TPA) induction. As to expression, detected in kidney thick ascending limbs and collecting ducts (at protein level).

It localises to the nucleus. It is found in the cytoplasm. Its function is as follows. Transcriptional regulator. Recognizes and binds to the DNA sequence 5'-GCG(T/G)GGGCG-3'(EGR-site) in the promoter region of target genes. Binds double-stranded target DNA, irrespective of the cytosine methylation status. Regulates the transcription of numerous target genes, and thereby plays an important role in regulating the response to growth factors, DNA damage, and ischemia. Plays a role in the regulation of cell survival, proliferation and cell death. Activates expression of p53/TP53 and TGFB1, and thereby helps prevent tumor formation. Required for normal progress through mitosis and normal proliferation of hepatocytes after partial hepatectomy. Mediates responses to ischemia and hypoxia; regulates the expression of proteins such as IL1B and CXCL2 that are involved in inflammatory processes and development of tissue damage after ischemia. Regulates biosynthesis of luteinizing hormone (LHB) in the pituitary. Regulates the amplitude of the expression rhythms of clock genes: BMAL1, PER2 and NR1D1 in the liver via the activation of PER1 (clock repressor) transcription. Regulates the rhythmic expression of core-clock gene BMAL1 in the suprachiasmatic nucleus (SCN). Regulates biosynthesis of glucocorticoid receptor GR/NR3C1 in the hippocampus and thereby may play a role in the behavioral and hypothalamic-pituitary-adrenal responses to stress in offspring. In Rattus norvegicus (Rat), this protein is Early growth response protein 1 (Egr1).